Consider the following 329-residue polypeptide: Protein PRY2 (329 aa).

Positions 1–18 (MKFSKVSLLAASASVALS) are cleaved as a signal peptide. The span at 122-131 (TSASATQDDV) shows a compositional bias: polar residues. The tract at residues 122–197 (TSASATQDDV…SSSDFSTSMV (76 aa)) is disordered. Residues 132-190 (TTTLTSSTQPTSTTTPTTTTTSPTTTTSPTTTASPTTTASPTTATTTQSTASSTQSSSS) show a composition bias toward low complexity. The 115-residue stretch at 197–311 (VNEHNTKRAL…EWGDYIICSY (115 aa)) folds into the SCP domain.

This sequence belongs to the CRISP family. O-glycosylated.

The protein resides in the secreted. In terms of biological role, secreted protein required for efficient export of lipids such as acetylated sterols. Acts in detoxification of hydrophobic compounds. The sequence is that of Protein PRY2 (PRY2) from Saccharomyces cerevisiae (strain ATCC 204508 / S288c) (Baker's yeast).